Consider the following 468-residue polypeptide: 3-isopropylmalate dehydratase large subunit 2 (468 aa).

Residues Cys349, Cys409, and Cys412 each coordinate [4Fe-4S] cluster.

It belongs to the aconitase/IPM isomerase family. LeuC type 1 subfamily. Heterodimer of LeuC and LeuD. [4Fe-4S] cluster serves as cofactor.

The catalysed reaction is (2R,3S)-3-isopropylmalate = (2S)-2-isopropylmalate. Its pathway is amino-acid biosynthesis; L-leucine biosynthesis; L-leucine from 3-methyl-2-oxobutanoate: step 2/4. Functionally, catalyzes the isomerization between 2-isopropylmalate and 3-isopropylmalate, via the formation of 2-isopropylmaleate. This chain is 3-isopropylmalate dehydratase large subunit 2, found in Bradyrhizobium diazoefficiens (strain JCM 10833 / BCRC 13528 / IAM 13628 / NBRC 14792 / USDA 110).